The chain runs to 459 residues: Cysteine--tRNA ligase (459 aa).

A Zn(2+)-binding site is contributed by Cys-28. The 'HIGH' region motif lies at 30–40 (VTIYDLCHIGH). Residues Cys-209, His-234, and Glu-238 each coordinate Zn(2+). Residues 266-270 (KMSKS) carry the 'KMSKS' region motif. Residue Lys-269 coordinates ATP.

It belongs to the class-I aminoacyl-tRNA synthetase family. Monomer. Zn(2+) is required as a cofactor.

It is found in the cytoplasm. It catalyses the reaction tRNA(Cys) + L-cysteine + ATP = L-cysteinyl-tRNA(Cys) + AMP + diphosphate. The protein is Cysteine--tRNA ligase of Shewanella pealeana (strain ATCC 700345 / ANG-SQ1).